The following is a 203-amino-acid chain: Gramillins biosynthetic cluster protein FGSG_00038 (203 aa).

The protein operates within mycotoxin biosynthesis. Its function is as follows. Part of the gene cluster that mediates the biosynthesis of gramillins A and B, bicyclic lipopeptides that induce cell death in maize leaves but not in wheat leaves. The nonribosomal peptide synthetase GRA1 incorporates respectively a glutamic adic (Glu), a leucine (Leu), a serine (Ser), a hydroxyglutamine (HOGln), a 2-amino decanoic acid, and 2 cysteins (CysB and CysA). The biosynthesis of 2-amino decanoic acid incorporated in gramillins could be initiated by a fatty acid synthase composed of the alpha and beta subunits FGSG_00036 and FGSG_11656. The cytochrome P450 monooxygenase FGSG_15680 could hydroxylate the fatty acid chain. Subsequent oxidation to the ketone by the oxidoreductase FGSG_00048 and transamination by aminotransferase FGSG_00049 could form 2-amino-decanoic acid. On the other hand, FGSG_15680 could also be responsible for the HO-modified glutamine at the gamma-position. Whether hydroxylation occurs on the fully assembled product or on the Gln residue prior to assembly into the gramillins requires further proof. The thioredoxin FGSG_00043 could also be required for the disulfide-bond formation between CysA and CysB. The specific involvement of the remaining proteins from the cluster is more difficult to discern, but could have broader regulatory (FGSG_00040 and FGSG_11657) or enzymatic functions (FGSG_00044 and FGSG_00045). The final C-domain of GRA1 does not possess the expected sequence of a termination CT domain, often implicated in macrocyclization and release of a cyclopeptidein fungal NRPs; and the thioesterase FGSG_00047 may act in concert with the terminal C-domain of GRA1 to catalyze the formation of the macrocyclic anhydride and release of the products. This is Gramillins biosynthetic cluster protein FGSG_00038 from Gibberella zeae (strain ATCC MYA-4620 / CBS 123657 / FGSC 9075 / NRRL 31084 / PH-1) (Wheat head blight fungus).